We begin with the raw amino-acid sequence, 90 residues long: MNKSQLIDKIAAGADISKAAAGRALDAVIASVTDSLKAGDDVALVGFGSFTVRERSARTGRNPQTGKEIKIAARKVPAFRAGKALKDAVN.

This sequence belongs to the bacterial histone-like protein family. Heterodimer of an alpha and a beta chain.

Histone-like DNA-binding protein which is capable of wrapping DNA to stabilize it, and thus to prevent its denaturation under extreme environmental conditions. In Serratia marcescens, this protein is DNA-binding protein HU-beta (hupB).